A 269-amino-acid chain; its full sequence is Rhamnulose-1-phosphate aldolase (269 aa).

Glu119 is an active-site residue. His142, His144, and His214 together coordinate Zn(2+).

The protein belongs to the aldolase class II family. RhaD subfamily. Zn(2+) serves as cofactor.

The protein resides in the cytoplasm. The enzyme catalyses L-rhamnulose 1-phosphate = (S)-lactaldehyde + dihydroxyacetone phosphate. It participates in carbohydrate degradation; L-rhamnose degradation; glycerone phosphate from L-rhamnose: step 3/3. Its function is as follows. Catalyzes the reversible cleavage of L-rhamnulose-1-phosphate to dihydroxyacetone phosphate (DHAP) and L-lactaldehyde. This chain is Rhamnulose-1-phosphate aldolase, found in Bacteroides thetaiotaomicron (strain ATCC 29148 / DSM 2079 / JCM 5827 / CCUG 10774 / NCTC 10582 / VPI-5482 / E50).